A 397-amino-acid chain; its full sequence is Tryptophan synthase beta chain (397 aa).

Lys87 carries the N6-(pyridoxal phosphate)lysine modification.

The protein belongs to the TrpB family. Tetramer of two alpha and two beta chains. It depends on pyridoxal 5'-phosphate as a cofactor.

The enzyme catalyses (1S,2R)-1-C-(indol-3-yl)glycerol 3-phosphate + L-serine = D-glyceraldehyde 3-phosphate + L-tryptophan + H2O. It participates in amino-acid biosynthesis; L-tryptophan biosynthesis; L-tryptophan from chorismate: step 5/5. Functionally, the beta subunit is responsible for the synthesis of L-tryptophan from indole and L-serine. The chain is Tryptophan synthase beta chain from Salmonella agona (strain SL483).